The chain runs to 399 residues: Zinc finger HIT domain-containing protein 2 (399 aa).

Residue methionine 1 is modified to N-acetylmethionine. Residues cysteine 7, cysteine 10, cysteine 22, cysteine 25, cysteine 30, cysteine 34, histidine 38, and cysteine 41 each contribute to the Zn(2+) site. An HIT-type zinc finger spans residues 7–41; the sequence is CGFCPAGEALPARYTCPRCNAPYCSLRCYRAHGAC. Disordered regions lie at residues 70–97 and 152–175; these read RLREQREAEDEPEEAGLGPGARPGGLSG and AEPEPAPARTALQSGDDAAAAEPF. A compositionally biased stretch (gly residues) spans 86-96; sequence LGPGARPGGLS. Residue threonine 161 is modified to Phosphothreonine.

In terms of assembly, interacts (via HIT-type zinc finger) with RUVBL2 in the presence of ATP or ADP; shows a stronger interaction in the presence of ADP. As to expression, low expression in most tissues; highly expressed in testis; particularly in seminiferous tubules.

May act as a bridging factor mediating the interaction between the R2TP/Prefoldin-like (R2TP/PFDL) complex and U5 small nuclear ribonucleoprotein (U5 snRNP). Required for the interaction of R2TP complex subunit RPAP3 and prefoldin-like subunit URI1 with U5 snRNP proteins EFTUD2 and PRPF8. May play a role in regulating the composition of the U5 snRNP complex. This is Zinc finger HIT domain-containing protein 2 (Znhit2) from Mus musculus (Mouse).